The chain runs to 394 residues: Protein maelstrom (394 aa).

A DNA-binding region (HMG box) is located at residues 2–69 (APKKQNGFMM…ARRDKRGSLN (68 aa)). The segment at 44–93 (TQQRGPYNSDAKDANAARRDKRGSLNGHGQVDKAQREAAESLMDKAQREA) is disordered. The segment covering 73–93 (QVDKAQREAAESLMDKAQREA) has biased composition (basic and acidic residues).

It belongs to the maelstrom family.

It is found in the cytoplasm. It localises to the nucleus. In terms of biological role, involved both in the piRNA and miRNA metabolic processes. As a component of the meiotic nuage, plays a central role during oogenesis by repressing transposable elements and preventing their mobilization, which is essential for the germline integrity. Repression of transposable elements is mediated via the piRNA metabolic process, which mediates the repression of transposable elements during meiosis by forming complexes composed of piRNAs and Piwi proteins and governs the repression of transposons. As a nuclear component, it is required for proper differentiation in the germline stem cell (GSC) lineage by repressing microRNA-7 (miR-7), thereby acting as an indirect regulator of bag-of-marbles (Bam). Acts by binding to the promoter of miR-7 gene and repressing its expression; miR-7 repression alleviates the Bam repression by miR-7, thereby allowing differentiation in the germline stem cell (GSC) lineage. In Drosophila simulans (Fruit fly), this protein is Protein maelstrom (mael).